Reading from the N-terminus, the 264-residue chain is uncharacterized protein (264 aa).

A helical transmembrane segment spans residues 9 to 29 (LVISILSLIATLSISFNIYFI).

It localises to the membrane. This is an uncharacterized protein from Ureaplasma parvum serovar 3 (strain ATCC 700970).